Here is a 515-residue protein sequence, read N- to C-terminus: E3 ubiquitin-protein ligase RNF217 (515 aa).

2 disordered regions span residues 1–125 (MGEE…VLAQ) and 147–189 (PEAP…ADPL). Residues 10 to 22 (GSGGARASGGGSA) show a composition bias toward gly residues. 2 stretches are compositionally biased toward low complexity: residues 39–49 (GPRAAASSSRP) and 147–157 (PEAPSAESPSP). Positions 158–178 (SESPPQAPLGPIPASPPPSFP) are enriched in pro residues. Positions 179-189 (SSPLSLPADPL) are enriched in low complexity. Residues 232 to 451 (MVLMCRVCLE…LSIFGCKYRY (220 aa)) are TRIAD supradomain. Residues C236, C239, C256, C259, C356, C359, H364, C369, C396, and C399 each contribute to the Zn(2+) site. The RING-type 1 zinc finger occupies 236–282 (CRVCLEDKPIKPLPCCKKAVCEECLKIYLSSQVQLGQVEIKCPVTEC). Residues 301 to 369 (IKYKYFLELG…HSPWHEGVNC (69 aa)) form an IBR-type zinc finger. The RING-type 2; atypical zinc-finger motif lies at 396–425 (CPKCKIHIQRTEGCDHMTCSQCNTNFCYRC). The active site involves C409. C414, C417, C422, C425, H438, and C447 together coordinate Zn(2+). Residues 476–496 (LILVLGLALGAIAVVIGLFVF) form a helical membrane-spanning segment.

Belongs to the RBR family. RNF217 subfamily. As to quaternary structure, interacts with HAX1.

The protein resides in the membrane. The protein localises to the cytoplasm. The enzyme catalyses [E2 ubiquitin-conjugating enzyme]-S-ubiquitinyl-L-cysteine + [acceptor protein]-L-lysine = [E2 ubiquitin-conjugating enzyme]-L-cysteine + [acceptor protein]-N(6)-ubiquitinyl-L-lysine.. It functions in the pathway protein modification; protein ubiquitination. In terms of biological role, E3 ubiquitin-protein ligase which accepts ubiquitin from E2 ubiquitin-conjugating enzymes in the form of a thioester and then directly transfers the ubiquitin to targeted substrates. Mediates the degradation of the iron exporter ferroportin/SLC40A1 and thus regulates iron homeostasis. This is E3 ubiquitin-protein ligase RNF217 (Rnf217) from Mus musculus (Mouse).